Here is a 269-residue protein sequence, read N- to C-terminus: MIEQQTGSRIRVEALAVAGQEQAEHWAQRLGLPLHDAEADFALQSTDDGLQLQQLGDDAPGAVRVDFVEGAVAHRRLFGGGTGQMIAKAVGIQPGVRPSVLDATAGLGKDAFVLASLGCELSLIERQPIIAALLEDGLARGRDDRDVGSIVARMHLLTGNSIEIIRGWTAEPPQVIYLDPMFPHREKNALVKKEMRLFRPLVGDDMDAPALLEAALALATHRVVVKRPRKAPCIDGPKPGYALDGKSSRYDIYPKKALKPKAVTDDSGA.

Residues 125 to 126 and Asp-179 contribute to the S-adenosyl-L-methionine site; that span reads ER.

Belongs to the methyltransferase superfamily. RsmJ family.

Its subcellular location is the cytoplasm. The enzyme catalyses guanosine(1516) in 16S rRNA + S-adenosyl-L-methionine = N(2)-methylguanosine(1516) in 16S rRNA + S-adenosyl-L-homocysteine + H(+). Specifically methylates the guanosine in position 1516 of 16S rRNA. In Pseudomonas savastanoi pv. phaseolicola (strain 1448A / Race 6) (Pseudomonas syringae pv. phaseolicola (strain 1448A / Race 6)), this protein is Ribosomal RNA small subunit methyltransferase J.